Here is a 619-residue protein sequence, read N- to C-terminus: UvrABC system protein C (619 aa).

The region spanning 20-98 is the GIY-YIG domain; that stretch reads TAPGVYRMYA…IKSLSPRYNV (79 aa). Residues 207-242 form the UVR domain; the sequence is DQLGEEIMHSMQQASEALEFERAARLRDLLSSLRSM.

The protein belongs to the UvrC family. As to quaternary structure, interacts with UvrB in an incision complex.

It is found in the cytoplasm. In terms of biological role, the UvrABC repair system catalyzes the recognition and processing of DNA lesions. UvrC both incises the 5' and 3' sides of the lesion. The N-terminal half is responsible for the 3' incision and the C-terminal half is responsible for the 5' incision. The protein is UvrABC system protein C of Xanthomonas axonopodis pv. citri (strain 306).